A 736-amino-acid polypeptide reads, in one-letter code: Exo-oligoalginate lyase (736 aa).

Positions 1 to 23 are cleaved as a signal peptide; sequence MLSVNTIKNTLLAAVLVSVPATA. Substrate-binding positions include Lys-136, 146-149, Lys-198, His-202, and 257-260; these read QSLN and YYQR. Catalysis depends on Tyr-258, which acts as the Proton donor. His-413 serves as the catalytic Proton acceptor. 2 residues coordinate Zn(2+): His-415 and Asp-433. Residue Arg-438 coordinates substrate. His-464 provides a ligand contact to Zn(2+). Position 667 (Glu-667) interacts with substrate.

Belongs to the polysaccharide lyase 17 family. Homodimer. The cofactor is Zn(2+).

The protein resides in the periplasm. It carries out the reaction Cleavage of 4-deoxy-alpha-L-erythro-hex-4-enopyranuronoside oligosaccharides into 4-deoxy-alpha-L-erythro-hex-4-enopyranuronate monosaccharides.. Functionally, catalyzes the depolymerization of alginate through an exolytic mode of action, via a beta-elimination mechanism. Preferentially acts on oligoalginates with degrees of polymerization higher than 2 to produce the alginate monomer, 4-deoxy-L-erythro-5-hexoseulose uronic acid. In Saccharophagus degradans (strain 2-40 / ATCC 43961 / DSM 17024), this protein is Exo-oligoalginate lyase.